Here is a 351-residue protein sequence, read N- to C-terminus: S-adenosylmethionine:tRNA ribosyltransferase-isomerase (351 aa).

It belongs to the QueA family. Monomer.

The protein resides in the cytoplasm. The catalysed reaction is 7-aminomethyl-7-carbaguanosine(34) in tRNA + S-adenosyl-L-methionine = epoxyqueuosine(34) in tRNA + adenine + L-methionine + 2 H(+). It functions in the pathway tRNA modification; tRNA-queuosine biosynthesis. In terms of biological role, transfers and isomerizes the ribose moiety from AdoMet to the 7-aminomethyl group of 7-deazaguanine (preQ1-tRNA) to give epoxyqueuosine (oQ-tRNA). This Photobacterium profundum (strain SS9) protein is S-adenosylmethionine:tRNA ribosyltransferase-isomerase.